Reading from the N-terminus, the 213-residue chain is G2/mitotic-specific cyclin-1 (213 aa).

Residues M1–R23 form a disordered region.

Belongs to the cyclin family. Cyclin AB subfamily. As to quaternary structure, interacts with the CDC2 protein kinase to form a serine/threonine kinase holoenzyme complex also known as maturation promoting factor (MPF). The cyclin subunit imparts substrate specificity to the complex. As to expression, only expressed in organs with dividing cells.

In terms of biological role, essential for the control of the cell cycle at the G2/M (mitosis) transition. This chain is G2/mitotic-specific cyclin-1, found in Medicago sativa (Alfalfa).